Here is a 1180-residue protein sequence, read N- to C-terminus: uncharacterized protein (1180 aa).

Disordered stretches follow at residues 229–280 (RQQG…DTSI), 431–465 (KQPPKEKAHRRGAPHPESEPESSEESTPVWRPPLK), 484–575 (SRDT…PNMR), 730–758 (GRPLRETHHNDQDPEPRSMTLDSPRASRT), 810–986 (GKAE…ASWD), 1045–1109 (RLQE…ELEM), and 1125–1152 (ERLEYQRRKQEAEEKARLEAEERRQKEE). Residues 269 to 279 (QEDETQAEDTS) are compositionally biased toward acidic residues. The span at 431 to 443 (KQPPKEKAHRRGA) shows a compositional bias: basic residues. Positions 486–497 (DTLSPQGSSSLP) are enriched in polar residues. Positions 509–518 (SKARHTRVHS) are enriched in basic residues. Basic and acidic residues-rich tracts occupy residues 730 to 745 (GRPLRETHHNDQDPEP), 826 to 837 (SHERDLINEAKR), and 846 to 856 (TKGPKSEREGK). The segment covering 872 to 889 (KAKKKLEKKTRPQRKRTQ) has biased composition (basic residues). A compositionally biased stretch (polar residues) spans 937-959 (QESQVSLDGRSSPSQIATVTGNM). Basic and acidic residues-rich tracts occupy residues 960–986 (ESKEERRCEDPSKALLTKREQEKASWD), 1045–1106 (RLQE…RQEE), and 1127–1152 (LEYQRRKQEAEEKARLEAEERRQKEE). Residues 988–1171 (LRAERAEMRW…ATKQAQEQAR (184 aa)) are a coiled coil.

This is an uncharacterized protein from Homo sapiens (Human).